A 270-amino-acid chain; its full sequence is NADPH-dependent 7-cyano-7-deazaguanine reductase (270 aa).

Position 79 to 81 (79 to 81 (IES)) interacts with substrate. NADPH is bound at residue 81-82 (SK). The Thioimide intermediate role is filled by Cys-177. Residue Asp-184 is the Proton donor of the active site. 216 to 217 (HE) contributes to the substrate binding site. 245–246 (RG) contacts NADPH.

The protein belongs to the GTP cyclohydrolase I family. QueF type 2 subfamily. Homodimer.

It is found in the cytoplasm. The enzyme catalyses 7-aminomethyl-7-carbaguanine + 2 NADP(+) = 7-cyano-7-deazaguanine + 2 NADPH + 3 H(+). Its pathway is tRNA modification; tRNA-queuosine biosynthesis. Its function is as follows. Catalyzes the NADPH-dependent reduction of 7-cyano-7-deazaguanine (preQ0) to 7-aminomethyl-7-deazaguanine (preQ1). The protein is NADPH-dependent 7-cyano-7-deazaguanine reductase of Acinetobacter baumannii (strain AB307-0294).